The sequence spans 182 residues: UPF0316 protein BCAH820_3389 (182 aa).

The next 3 membrane-spanning stretches (helical) occupy residues 6 to 26, 32 to 52, and 58 to 78; these read LIFV…ILLV, SAAA…GIVF, and WMNI…GGYI.

Belongs to the UPF0316 family.

It localises to the cell membrane. In Bacillus cereus (strain AH820), this protein is UPF0316 protein BCAH820_3389.